Here is a 464-residue protein sequence, read N- to C-terminus: Putative dipeptidase CPC735_014430 (464 aa).

Positions 1 to 34 (MSTMSARDNEKGSARSQPSHAAASEIENVPRPSR) are disordered. Residues 40–56 (GTMIKVFIICACAGIVS) form a helical membrane-spanning segment. Zn(2+) contacts are provided by histidine 93, aspartate 95, and glutamate 206. The cysteines at positions 145 and 235 are disulfide-linked. Histidine 233 serves as a coordination point for substrate. Histidine 277 and histidine 298 together coordinate Zn(2+). Substrate-binding residues include arginine 309 and aspartate 369. Asparagine 382 carries N-linked (GlcNAc...) asparagine glycosylation.

It belongs to the metallo-dependent hydrolases superfamily. Peptidase M19 family. Requires Zn(2+) as cofactor.

It localises to the membrane. The enzyme catalyses an L-aminoacyl-L-amino acid + H2O = 2 an L-alpha-amino acid. Hydrolyzes a wide range of dipeptides. This chain is Putative dipeptidase CPC735_014430, found in Coccidioides posadasii (strain C735) (Valley fever fungus).